We begin with the raw amino-acid sequence, 107 residues long: Phosphoribosyl-ATP pyrophosphatase (107 aa).

It belongs to the PRA-PH family.

It localises to the cytoplasm. The enzyme catalyses 1-(5-phospho-beta-D-ribosyl)-ATP + H2O = 1-(5-phospho-beta-D-ribosyl)-5'-AMP + diphosphate + H(+). The protein operates within amino-acid biosynthesis; L-histidine biosynthesis; L-histidine from 5-phospho-alpha-D-ribose 1-diphosphate: step 2/9. In Azoarcus sp. (strain BH72), this protein is Phosphoribosyl-ATP pyrophosphatase.